Consider the following 616-residue polypeptide: Fatty acyl-CoA reductase 2, chloroplastic (616 aa).

The N-terminal 14 residues, 1–14 (MEALFLSSSSSSIV), are a transit peptide targeting the chloroplast. An NAD(P)H-binding motif is present at residues 133–143 (FLITGSTGFLA). Residues Y357 and K361 contribute to the active site.

The protein belongs to the fatty acyl-CoA reductase family. As to expression, expressed in the tapetum of anthers.

It localises to the plastid. The protein localises to the chloroplast. It carries out the reaction a long-chain fatty acyl-CoA + 2 NADPH + 2 H(+) = a long-chain primary fatty alcohol + 2 NADP(+) + CoA. The catalysed reaction is hexadecanoyl-CoA + 2 NADPH + 2 H(+) = hexadecan-1-ol + 2 NADP(+) + CoA. It catalyses the reaction hexadecanoyl-[ACP] + 2 NADPH + 2 H(+) = hexadecan-1-ol + holo-[ACP] + 2 NADP(+). Functionally, catalyzes the reduction of fatty acyl-CoA and -ACP (acyl carrier protein) substrates to fatty alcohols. Triggers the accumulation of C16 and C18 fatty alcohols; converts palmitoyl-acyl carrier protein to the corresponding C16:0 alcohol with NAD(P)H as electron donor, but seems inactive toward palmitoyl- or other acyl-coenzyme A. Also triggers the formation of some C16:0 aldehydes. Involved in the synthesis of the lipid component in sporopollenin. Required for exine patterning of pollen grain by mediating the formation of pollen wall substances. In Arabidopsis thaliana (Mouse-ear cress), this protein is Fatty acyl-CoA reductase 2, chloroplastic.